Here is a 335-residue protein sequence, read N- to C-terminus: 2-acylglycerol O-acyltransferase 1 (335 aa).

2 consecutive transmembrane segments (helical) span residues Trp24–Leu44 and Val47–Ala67. Residues Asn125 and Asn180 are each glycosylated (N-linked (GlcNAc...) asparagine).

The protein belongs to the diacylglycerol acyltransferase family.

The protein localises to the endoplasmic reticulum membrane. The catalysed reaction is a 2-acylglycerol + an acyl-CoA = a 1,2-diacylglycerol + CoA. It catalyses the reaction a 2-acylglycerol + an acyl-CoA = a 1,2-diacyl-sn-glycerol + CoA. It carries out the reaction a 2-acylglycerol + an acyl-CoA = a 2,3-diacyl-sn-glycerol + CoA. The enzyme catalyses a 1-acylglycerol + an acyl-CoA = a 1,2-diacylglycerol + CoA. The catalysed reaction is a 1-acylglycerol + an acyl-CoA = a 1,3-diacylglycerol + CoA. It catalyses the reaction a 1-acyl-sn-glycerol + an acyl-CoA = a 1,3-diacyl-sn-glycerol + CoA. It carries out the reaction a 3-acyl-sn-glycerol + an acyl-CoA = a 1,3-diacyl-sn-glycerol + CoA. It functions in the pathway glycerolipid metabolism; triacylglycerol biosynthesis. Its function is as follows. Involved in glycerolipid synthesis and lipid metabolism. Catalyzes the formation of diacylglycerol, the precursor of triacylglycerol, by transferring the acyl chain of a fatty acyl-CoA to a monoacylglycerol, mainly at the sn-1 or sn-3 positions. It uses both sn-2-monoacylglycerol (2-acylglycerol) and sn-1-monoacylglycerol (1-acyl-sn-glycerol) equally well as substrates, and uses sn-3-monoacylglycerol (3-acyl-sn-glycerol) with lower efficiency. This Xenopus laevis (African clawed frog) protein is 2-acylglycerol O-acyltransferase 1 (mogat1).